The chain runs to 645 residues: UPF0313 protein CLB_0243 (645 aa).

In terms of domain architecture, Radical SAM core spans 295-566; sequence AIKEVKFSIT…RMQRALLQFS (272 aa). Cys309, Cys313, and Cys316 together coordinate [4Fe-4S] cluster. A disordered region spans residues 598–645; sequence NKPYKKSHKKNNAKNNNNHYNKNNNYNKNKDISKKNKKNSLSKHKKRK. Basic residues predominate over residues 600–609; sequence PYKKSHKKNN. The span at 610–624 shows a compositional bias: low complexity; that stretch reads AKNNNNHYNKNNNYN. Positions 632-645 are enriched in basic residues; sequence KNKKNSLSKHKKRK.

The protein belongs to the UPF0313 family. It depends on [4Fe-4S] cluster as a cofactor.

The chain is UPF0313 protein CLB_0243 from Clostridium botulinum (strain ATCC 19397 / Type A).